A 139-amino-acid polypeptide reads, in one-letter code: Natriuretic peptide Mc-NP (139 aa).

The first 25 residues, 1–25 (MVGLSRLRGGGLLLVLALLPLALDG), serve as a signal peptide directing secretion. The propeptide occupies 26–75 (KPLEEAPTAPSRIIPFSRPVRKQSQAVLDPMVHPERPAGSGDDGDSRRLE). Residues 45–72 (VRKQSQAVLDPMVHPERPAGSGDDGDSR) form a disordered region. A disulfide bridge connects residues Cys-86 and Cys-102. A propeptide spanning residues 117-139 (IIPFSRPVRKESRAALDRMQQPG) is cleaved from the precursor.

Belongs to the natriuretic peptide family. As to expression, expressed by the venom gland.

Its subcellular location is the secreted. In terms of biological role, snake venom natriuretic peptide that dose-dependently induces the rapid relaxation of rat aortic strips phenylephrine-precontracted. Acts by stimulating cGMP production in a dose-dependent manner (by probably activating NPR1 and/or NPR2). May also show potent hypotensive effects. A synthetic peptide (AA 77-108, where the Cys-95 is replaced by a Ser) increases sodium excretion and urinary volume in rat kidneys. This Micrurus corallinus (Brazilian coral snake) protein is Natriuretic peptide Mc-NP.